The chain runs to 195 residues: MIIGLTGGIGVGKSFIANCFKEFGAAVFDADFIVHQLYRVDKNIISYAEKNFPGAIANGEIDKTVLSKYFLDYDENWKQFQSLVHSAVQNELEIFIAQDKEINRKLLVLDVPLLLETRFHLYCDFIIFIYADSAAQAQRLSERNIDKEKLDLISSIQLPVKEKRQMSDFTIDTSTSKEHVLSQVKDIVDSLSLSS.

The region spanning Ile-2 to Ser-195 is the DPCK domain. Gly-10–Phe-15 serves as a coordination point for ATP.

The protein belongs to the CoaE family.

The protein resides in the cytoplasm. It carries out the reaction 3'-dephospho-CoA + ATP = ADP + CoA + H(+). Its pathway is cofactor biosynthesis; coenzyme A biosynthesis; CoA from (R)-pantothenate: step 5/5. In terms of biological role, catalyzes the phosphorylation of the 3'-hydroxyl group of dephosphocoenzyme A to form coenzyme A. The chain is Dephospho-CoA kinase from Wolbachia sp. subsp. Brugia malayi (strain TRS).